The following is a 152-amino-acid chain: Small ribosomal subunit protein bS6 (152 aa).

Residues 94 to 152 (VKQEGPLPTPKPSNKSSTQSENKDNPETKVESKEEQSVTNSDTSTTKKDDNEIKENTES) form a disordered region. Composition is skewed to basic and acidic residues over residues 114–129 (ENKDNPETKVESKEEQ) and 138–152 (TTKKDDNEIKENTES).

Belongs to the bacterial ribosomal protein bS6 family.

Its function is as follows. Binds together with bS18 to 16S ribosomal RNA. The chain is Small ribosomal subunit protein bS6 from Prochlorococcus marinus (strain MIT 9312).